A 138-amino-acid chain; its full sequence is Proline-rich protein 34 (138 aa).

Residues 22 to 37 (SAPTSPPNPATRPAPG) show a composition bias toward pro residues. 2 disordered regions span residues 22-55 (SAPT…PTRG) and 81-107 (APRL…SPAR).

The sequence is that of Proline-rich protein 34 (PRR34) from Homo sapiens (Human).